Reading from the N-terminus, the 94-residue chain is Small ribosomal subunit protein bS6 (94 aa).

Belongs to the bacterial ribosomal protein bS6 family.

Binds together with bS18 to 16S ribosomal RNA. This chain is Small ribosomal subunit protein bS6, found in Alkaliphilus metalliredigens (strain QYMF).